A 569-amino-acid chain; its full sequence is Urease subunit alpha (569 aa).

The Urease domain maps to 131-569 (GSIDTHIHFI…VPMAQRYFLL (439 aa)). The Ni(2+) site is built by histidine 136, histidine 138, and lysine 219. The residue at position 219 (lysine 219) is an N6-carboxylysine. Position 221 (histidine 221) interacts with substrate. Positions 248 and 274 each coordinate Ni(2+). Catalysis depends on histidine 322, which acts as the Proton donor. Aspartate 362 is a Ni(2+) binding site.

Belongs to the metallo-dependent hydrolases superfamily. Urease alpha subunit family. In terms of assembly, heterotrimer of UreA (gamma), UreB (beta) and UreC (alpha) subunits. Three heterotrimers associate to form the active enzyme. The cofactor is Ni cation. Carboxylation allows a single lysine to coordinate two nickel ions.

The protein resides in the cytoplasm. It catalyses the reaction urea + 2 H2O + H(+) = hydrogencarbonate + 2 NH4(+). The protein operates within nitrogen metabolism; urea degradation; CO(2) and NH(3) from urea (urease route): step 1/1. This Prochlorococcus marinus (strain AS9601) protein is Urease subunit alpha.